The following is a 77-amino-acid chain: Conotoxin VnMKLT1-012 (77 aa).

The first 22 residues, 1–22 (MKLTCMMIVAVLFLTAWTFVTA), serve as a signal peptide directing secretion. A propeptide spanning residues 23–48 (DDSRNGLDYLFPKARHEMNPKASRDI) is cleaved from the precursor. 3 cysteine pairs are disulfide-bonded: C51-C68, C58-C72, and C67-C76.

Belongs to the conotoxin O1 superfamily. As to expression, expressed by the venom duct.

It is found in the secreted. This Conus ventricosus (Mediterranean cone) protein is Conotoxin VnMKLT1-012.